Reading from the N-terminus, the 151-residue chain is Lipoprotein signal peptidase (151 aa).

A run of 2 helical transmembrane segments spans residues 54–74 (GQMW…IYLI) and 83–103 (LLKI…IDRL). Catalysis depends on residues D110 and D125. The chain crosses the membrane as a helical span at residues 120–140 (IFNIADSALTIGVGLFLLNIL).

Belongs to the peptidase A8 family.

The protein localises to the cell membrane. The enzyme catalyses Release of signal peptides from bacterial membrane prolipoproteins. Hydrolyzes -Xaa-Yaa-Zaa-|-(S,diacylglyceryl)Cys-, in which Xaa is hydrophobic (preferably Leu), and Yaa (Ala or Ser) and Zaa (Gly or Ala) have small, neutral side chains.. The protein operates within protein modification; lipoprotein biosynthesis (signal peptide cleavage). This protein specifically catalyzes the removal of signal peptides from prolipoproteins. In Shouchella clausii (strain KSM-K16) (Alkalihalobacillus clausii), this protein is Lipoprotein signal peptidase.